The following is a 258-amino-acid chain: Aspartate/glutamate leucyltransferase (258 aa).

This sequence belongs to the R-transferase family. Bpt subfamily.

It is found in the cytoplasm. The enzyme catalyses N-terminal L-glutamyl-[protein] + L-leucyl-tRNA(Leu) = N-terminal L-leucyl-L-glutamyl-[protein] + tRNA(Leu) + H(+). The catalysed reaction is N-terminal L-aspartyl-[protein] + L-leucyl-tRNA(Leu) = N-terminal L-leucyl-L-aspartyl-[protein] + tRNA(Leu) + H(+). Functions in the N-end rule pathway of protein degradation where it conjugates Leu from its aminoacyl-tRNA to the N-termini of proteins containing an N-terminal aspartate or glutamate. The polypeptide is Aspartate/glutamate leucyltransferase (Bradyrhizobium sp. (strain ORS 278)).